A 491-amino-acid polypeptide reads, in one-letter code: GTPase Der (491 aa).

The 176-residue stretch at alanine 3–aspartate 178 folds into the EngA-type G 1 domain. GTP is bound by residues glycine 9–serine 16, aspartate 57–isoleucine 61, and asparagine 130–aspartate 133. Positions aspartate 198–glutamate 224 are enriched in acidic residues. Residues aspartate 198–alanine 225 form a disordered region. Residues leucine 227–serine 400 form the EngA-type G 2 domain. GTP contacts are provided by residues glycine 233–serine 240, aspartate 280–valine 284, and asparagine 345–aspartate 348. Positions valine 401–histidine 485 constitute a KH-like domain.

It belongs to the TRAFAC class TrmE-Era-EngA-EngB-Septin-like GTPase superfamily. EngA (Der) GTPase family. In terms of assembly, associates with the 50S ribosomal subunit.

In terms of biological role, GTPase that plays an essential role in the late steps of ribosome biogenesis. In Nitratidesulfovibrio vulgaris (strain ATCC 29579 / DSM 644 / CCUG 34227 / NCIMB 8303 / VKM B-1760 / Hildenborough) (Desulfovibrio vulgaris), this protein is GTPase Der.